The chain runs to 957 residues: Atromentin synthetase (957 aa).

An adenylation (A) domain region spans residues 59–464 (SVQARTFQDF…SGRIKDTVIV (406 aa)). Positions 596–674 (TPSTDDEKAL…DLAKYVNGLV (79 aa)) constitute a Carrier domain. The interval 601–671 (DEKALAAIYA…IVSDLAKYVN (71 aa)) is thiolation and peptide carrier (T) domain. Ser-633 bears the O-(pantetheine 4'-phosphoryl)serine mark. The thioesterase (TE) domain stretch occupies residues 697 to 947 (PIFFVHPGVG…FDHVPQFQKI (251 aa)).

It belongs to the ATP-dependent AMP-binding enzyme family.

It functions in the pathway secondary metabolite biosynthesis. In terms of biological role, the L-tyrosine:2-oxoglutarate aminotransferase atrD and the atromentin synthetase atrA catalyze consecutive steps to turn over L-tyrosine into atromentin, which represents the generic precursor molecule for the entire terphenylquinone and pulvinic acid family of pigments, which are widely distributed secondary metabolites in homobasidiomycetes. The first step is catalyzed by atrD which converts L-tyrosine in to 4-hydroxyphenylpyruvate (4-HPP). Adenylation of two 4-HPP monomers by the atrA adenylation (A) domain, ester bond formation between monomers and atrA, and symmetric C-C-bond formation between two monomers by atrA leads to atromentin. This chain is Atromentin synthetase, found in Tapinella panuoides (Oyster rollrim mushroom).